The sequence spans 201 residues: Small ribosomal subunit protein uS4c (201 aa).

One can recognise an S4 RNA-binding domain in the interval 89–151 (MRLDNILFRL…QKSKTLIQNY (63 aa)).

Belongs to the universal ribosomal protein uS4 family. In terms of assembly, part of the 30S ribosomal subunit. Contacts protein S5. The interaction surface between S4 and S5 is involved in control of translational fidelity.

Its subcellular location is the plastid. The protein resides in the chloroplast. One of the primary rRNA binding proteins, it binds directly to 16S rRNA where it nucleates assembly of the body of the 30S subunit. Its function is as follows. With S5 and S12 plays an important role in translational accuracy. The protein is Small ribosomal subunit protein uS4c (rps4) of Phaseolus vulgaris (Kidney bean).